The primary structure comprises 211 residues: ATP phosphoribosyltransferase (211 aa).

The protein belongs to the ATP phosphoribosyltransferase family. Short subfamily. Heteromultimer composed of HisG and HisZ subunits.

It localises to the cytoplasm. It catalyses the reaction 1-(5-phospho-beta-D-ribosyl)-ATP + diphosphate = 5-phospho-alpha-D-ribose 1-diphosphate + ATP. It functions in the pathway amino-acid biosynthesis; L-histidine biosynthesis; L-histidine from 5-phospho-alpha-D-ribose 1-diphosphate: step 1/9. In terms of biological role, catalyzes the condensation of ATP and 5-phosphoribose 1-diphosphate to form N'-(5'-phosphoribosyl)-ATP (PR-ATP). Has a crucial role in the pathway because the rate of histidine biosynthesis seems to be controlled primarily by regulation of HisG enzymatic activity. This is ATP phosphoribosyltransferase from Pseudomonas fluorescens (strain ATCC BAA-477 / NRRL B-23932 / Pf-5).